Reading from the N-terminus, the 314-residue chain is uncharacterized protein (314 aa).

Positions 1–24 (MKRRRRWRGWLLFPALCFCLLCEA) are cleaved as a signal peptide. 14 N-linked (GlcNAc...) asparagine; by host glycosylation sites follow: asparagine 28, asparagine 43, asparagine 57, asparagine 77, asparagine 101, asparagine 102, asparagine 109, asparagine 151, asparagine 170, asparagine 217, asparagine 223, asparagine 252, asparagine 255, and asparagine 268. Over residues 47 to 114 (ATTGTTTTSP…TIGTNATSPS (68 aa)) the composition is skewed to low complexity. A disordered region spans residues 47–116 (ATTGTTTTSP…GTNATSPSPS (70 aa)).

It belongs to the HHV-5 UL116 protein family. Interacts with gH. Interacts with UL148. Highly glycosylated.

The protein localises to the virion. It localises to the host endoplasmic reticulum. Chaperone protein that cooperates with UL148 to regulate the abundance of gH complexes in virion. First interactor of gH in the host endoplasmic reticulum, regulates the early folding steps of virion assembly. Then, UL148 is recruited and favors the binding of gL. This is an uncharacterized protein from Homo sapiens (Human).